Consider the following 65-residue polypeptide: Large ribosomal subunit protein bL35 (65 aa).

This sequence belongs to the bacterial ribosomal protein bL35 family.

This chain is Large ribosomal subunit protein bL35, found in Aromatoleum aromaticum (strain DSM 19018 / LMG 30748 / EbN1) (Azoarcus sp. (strain EbN1)).